A 1058-amino-acid chain; its full sequence is Isoleucine--tRNA ligase (1058 aa).

A 'HIGH' region motif is present at residues 48–58 (PYTTGHIHLGT). Positions 596–600 (KMSKS) match the 'KMSKS' region motif. K599 contributes to the ATP binding site.

This sequence belongs to the class-I aminoacyl-tRNA synthetase family. IleS type 2 subfamily. In terms of assembly, monomer. The cofactor is Zn(2+).

The protein resides in the cytoplasm. The enzyme catalyses tRNA(Ile) + L-isoleucine + ATP = L-isoleucyl-tRNA(Ile) + AMP + diphosphate. Catalyzes the attachment of isoleucine to tRNA(Ile). As IleRS can inadvertently accommodate and process structurally similar amino acids such as valine, to avoid such errors it has two additional distinct tRNA(Ile)-dependent editing activities. One activity is designated as 'pretransfer' editing and involves the hydrolysis of activated Val-AMP. The other activity is designated 'posttransfer' editing and involves deacylation of mischarged Val-tRNA(Ile). The sequence is that of Isoleucine--tRNA ligase from Methanosarcina acetivorans (strain ATCC 35395 / DSM 2834 / JCM 12185 / C2A).